A 593-amino-acid chain; its full sequence is MNELIKHKLELLPDSPGCYLHKDKNGTIIYVGKAKNLKNRVKSYFHGSHNTKTELLVSEIEDFEYIVTTSNTEALLLEINLIQENMPKYNIRLKDDKSYPYIKITNERYPRLMITRQVKKSDGTYFGPYPDSGAATEIKRLLDRLFPFKKCTNPANKVCFYYHLGQCNAHTVCQTNKAYWDSLREDVKQFLNGKDNKIVNGLTEKMKSAAMTMEFERAAEYRDLIEAISLLRTKQRVIHQDMKDRDVFGYFVDKGWMCVQVFFVRNGKLIQRDVNMFPYYNEPEEDFLTYIGQFYQDTKHFLPKEVFIPQDIDAKSVETIVGCKIVKPQRGEKKQLVNLAIKNARVSLQQKFDLLEKDIRKTHGAIENLGNLLNIPKPVRIEAFDNSNIQGTSPVAAMVVFVNGKPSKKDYRKFKIKTVIGPDDYASMREVIHRRYSRVLKDGLTPPDLIVIDGGQGQVNIARDVIENQFGLAIPIAGLQKNDKHQTHELLFGDPLEVVELPRNSEEFFLLHRIQDEVHRFAITFHRQLRSKNSFSSKLDGITGLGPKRKQLLMKHFKSLPNIQKAEIEDIIMCGIPRTVAESLRDSLNDPPK.

A GIY-YIG domain is found at 14–91 (DSPGCYLHKD…IQENMPKYNI (78 aa)). Residues 196-231 (NKIVNGLTEKMKSAAMTMEFERAAEYRDLIEAISLL) enclose the UVR domain.

The protein belongs to the UvrC family. As to quaternary structure, interacts with UvrB in an incision complex.

The protein resides in the cytoplasm. Functionally, the UvrABC repair system catalyzes the recognition and processing of DNA lesions. UvrC both incises the 5' and 3' sides of the lesion. The N-terminal half is responsible for the 3' incision and the C-terminal half is responsible for the 5' incision. The protein is UvrABC system protein C of Streptococcus agalactiae serotype V (strain ATCC BAA-611 / 2603 V/R).